We begin with the raw amino-acid sequence, 342 residues long: Ketol-acid reductoisomerase (NADP(+)) (342 aa).

One can recognise a KARI N-terminal Rossmann domain in the interval 2–181; sequence VKVYYNGDIK…GGARAGVLET (180 aa). NADP(+) contacts are provided by residues 25–28, R48, S52, and 82–85; these read YGSQ and DEQQ. Residue H107 is part of the active site. Residue G133 coordinates NADP(+). Residues 182 to 327 form the KARI C-terminal knotted domain; sequence TFKEETETDL…RKLREMMPFV (146 aa). 4 residues coordinate Mg(2+): D190, E194, E226, and E230. S251 provides a ligand contact to substrate.

This sequence belongs to the ketol-acid reductoisomerase family. Mg(2+) serves as cofactor.

The enzyme catalyses (2R)-2,3-dihydroxy-3-methylbutanoate + NADP(+) = (2S)-2-acetolactate + NADPH + H(+). The catalysed reaction is (2R,3R)-2,3-dihydroxy-3-methylpentanoate + NADP(+) = (S)-2-ethyl-2-hydroxy-3-oxobutanoate + NADPH + H(+). It functions in the pathway amino-acid biosynthesis; L-isoleucine biosynthesis; L-isoleucine from 2-oxobutanoate: step 2/4. It participates in amino-acid biosynthesis; L-valine biosynthesis; L-valine from pyruvate: step 2/4. Involved in the biosynthesis of branched-chain amino acids (BCAA). Catalyzes an alkyl-migration followed by a ketol-acid reduction of (S)-2-acetolactate (S2AL) to yield (R)-2,3-dihydroxy-isovalerate. In the isomerase reaction, S2AL is rearranged via a Mg-dependent methyl migration to produce 3-hydroxy-3-methyl-2-ketobutyrate (HMKB). In the reductase reaction, this 2-ketoacid undergoes a metal-dependent reduction by NADPH to yield (R)-2,3-dihydroxy-isovalerate. This Bacillus licheniformis (strain ATCC 14580 / DSM 13 / JCM 2505 / CCUG 7422 / NBRC 12200 / NCIMB 9375 / NCTC 10341 / NRRL NRS-1264 / Gibson 46) protein is Ketol-acid reductoisomerase (NADP(+)).